A 792-amino-acid polypeptide reads, in one-letter code: Probable CoA-transferase Rv1866 (792 aa).

Aspartate 558 acts as the Nucleophile in catalysis.

It belongs to the CoA-transferase III family.

Its function is as follows. Probable CoA-transferase. This is Probable CoA-transferase Rv1866 from Mycobacterium tuberculosis (strain ATCC 25618 / H37Rv).